The sequence spans 659 residues: Threonine--tRNA ligase (659 aa).

The region spanning 3–64 (EKIRITLIDN…LEDGRLEIIT (62 aa)) is the TGS domain. The tract at residues 249 to 555 (DHRRLGQEMD…LIEHHAGRFP (307 aa)) is catalytic. Zn(2+) is bound by residues Cys354, His405, and His532.

Belongs to the class-II aminoacyl-tRNA synthetase family. Homodimer. Zn(2+) is required as a cofactor.

It is found in the cytoplasm. It catalyses the reaction tRNA(Thr) + L-threonine + ATP = L-threonyl-tRNA(Thr) + AMP + diphosphate + H(+). Catalyzes the attachment of threonine to tRNA(Thr) in a two-step reaction: L-threonine is first activated by ATP to form Thr-AMP and then transferred to the acceptor end of tRNA(Thr). Also edits incorrectly charged L-seryl-tRNA(Thr). This chain is Threonine--tRNA ligase, found in Zymomonas mobilis subsp. mobilis (strain ATCC 31821 / ZM4 / CP4).